Consider the following 373-residue polypeptide: Capsular polysaccharide phosphotransferase (373 aa).

This sequence belongs to the stealth family.

Functionally, part of a capsule gene locus. Expression was not detected under standard growth conditions. The sequence is that of Capsular polysaccharide phosphotransferase from Neisseria meningitidis serogroup B.